Here is a 293-residue protein sequence, read N- to C-terminus: Putative phosphoenolpyruvate synthase regulatory protein (293 aa).

Glycine 173–threonine 180 contributes to the ADP binding site.

Belongs to the pyruvate, phosphate/water dikinase regulatory protein family. PSRP subfamily.

The enzyme catalyses [pyruvate, water dikinase] + ADP = [pyruvate, water dikinase]-phosphate + AMP + H(+). It catalyses the reaction [pyruvate, water dikinase]-phosphate + phosphate + H(+) = [pyruvate, water dikinase] + diphosphate. Bifunctional serine/threonine kinase and phosphorylase involved in the regulation of the phosphoenolpyruvate synthase (PEPS) by catalyzing its phosphorylation/dephosphorylation. This Photorhabdus laumondii subsp. laumondii (strain DSM 15139 / CIP 105565 / TT01) (Photorhabdus luminescens subsp. laumondii) protein is Putative phosphoenolpyruvate synthase regulatory protein.